The primary structure comprises 501 residues: Glycerol kinase (501 aa).

Thr12 lines the ADP pocket. ATP-binding residues include Thr12, Thr13, and Ser14. Thr12 serves as a coordination point for sn-glycerol 3-phosphate. Arg16 is an ADP binding site. Arg82, Glu83, Tyr134, and Asp244 together coordinate sn-glycerol 3-phosphate. The glycerol site is built by Arg82, Glu83, Tyr134, Asp244, and Gln245. 2 residues coordinate ADP: Thr266 and Gly310. 4 residues coordinate ATP: Thr266, Gly310, Gln314, and Gly411. ADP contacts are provided by Gly411 and Asn415.

The protein belongs to the FGGY kinase family.

It catalyses the reaction glycerol + ATP = sn-glycerol 3-phosphate + ADP + H(+). It functions in the pathway polyol metabolism; glycerol degradation via glycerol kinase pathway; sn-glycerol 3-phosphate from glycerol: step 1/1. With respect to regulation, inhibited by fructose 1,6-bisphosphate (FBP). Functionally, key enzyme in the regulation of glycerol uptake and metabolism. Catalyzes the phosphorylation of glycerol to yield sn-glycerol 3-phosphate. The sequence is that of Glycerol kinase from Methylobacterium radiotolerans (strain ATCC 27329 / DSM 1819 / JCM 2831 / NBRC 15690 / NCIMB 10815 / 0-1).